Consider the following 2280-residue polypeptide: Protein Ycf2 (2280 aa).

1634 to 1641 (GSIGTGRS) lines the ATP pocket.

This sequence belongs to the Ycf2 family.

Its subcellular location is the plastid. It is found in the chloroplast stroma. Functionally, probable ATPase of unknown function. Its presence in a non-photosynthetic plant (Epifagus virginiana) and experiments in tobacco indicate that it has an essential function which is probably not related to photosynthesis. This is Protein Ycf2 from Eucalyptus globulus subsp. globulus (Tasmanian blue gum).